The following is a 159-amino-acid chain: Ribosomal RNA large subunit methyltransferase H (159 aa).

Residues Leu76, Gly108, and 127 to 132 (FSKMTL) each bind S-adenosyl-L-methionine.

The protein belongs to the RNA methyltransferase RlmH family. Homodimer.

The protein localises to the cytoplasm. The enzyme catalyses pseudouridine(1915) in 23S rRNA + S-adenosyl-L-methionine = N(3)-methylpseudouridine(1915) in 23S rRNA + S-adenosyl-L-homocysteine + H(+). Its function is as follows. Specifically methylates the pseudouridine at position 1915 (m3Psi1915) in 23S rRNA. The chain is Ribosomal RNA large subunit methyltransferase H from Bacillus cereus (strain ATCC 14579 / DSM 31 / CCUG 7414 / JCM 2152 / NBRC 15305 / NCIMB 9373 / NCTC 2599 / NRRL B-3711).